The sequence spans 443 residues: ATP-dependent protease ATPase subunit HslU (443 aa).

Residues Ile-18, 60–65 (GVGKTE), Asp-256, Glu-321, and Arg-393 each bind ATP.

It belongs to the ClpX chaperone family. HslU subfamily. A double ring-shaped homohexamer of HslV is capped on each side by a ring-shaped HslU homohexamer. The assembly of the HslU/HslV complex is dependent on binding of ATP.

Its subcellular location is the cytoplasm. ATPase subunit of a proteasome-like degradation complex; this subunit has chaperone activity. The binding of ATP and its subsequent hydrolysis by HslU are essential for unfolding of protein substrates subsequently hydrolyzed by HslV. HslU recognizes the N-terminal part of its protein substrates and unfolds these before they are guided to HslV for hydrolysis. In Citrobacter koseri (strain ATCC BAA-895 / CDC 4225-83 / SGSC4696), this protein is ATP-dependent protease ATPase subunit HslU.